We begin with the raw amino-acid sequence, 195 residues long: Imidazoleglycerol-phosphate dehydratase (195 aa).

This sequence belongs to the imidazoleglycerol-phosphate dehydratase family.

It localises to the cytoplasm. It catalyses the reaction D-erythro-1-(imidazol-4-yl)glycerol 3-phosphate = 3-(imidazol-4-yl)-2-oxopropyl phosphate + H2O. It functions in the pathway amino-acid biosynthesis; L-histidine biosynthesis; L-histidine from 5-phospho-alpha-D-ribose 1-diphosphate: step 6/9. This Azoarcus sp. (strain BH72) protein is Imidazoleglycerol-phosphate dehydratase.